A 457-amino-acid polypeptide reads, in one-letter code: Argininosuccinate lyase (457 aa).

The protein belongs to the lyase 1 family. Argininosuccinate lyase subfamily.

The protein resides in the cytoplasm. The enzyme catalyses 2-(N(omega)-L-arginino)succinate = fumarate + L-arginine. Its pathway is amino-acid biosynthesis; L-arginine biosynthesis; L-arginine from L-ornithine and carbamoyl phosphate: step 3/3. The polypeptide is Argininosuccinate lyase (Escherichia coli O139:H28 (strain E24377A / ETEC)).